The chain runs to 157 residues: Large ribosomal subunit protein uL15 (157 aa).

Residues 1–64 (MKLNEIPAVP…MPLQRRLPKR (64 aa)) are disordered. The span at 21 to 31 (RGPGSGNGKTA) shows a compositional bias: gly residues.

Belongs to the universal ribosomal protein uL15 family. In terms of assembly, part of the 50S ribosomal subunit.

Binds to the 23S rRNA. The sequence is that of Large ribosomal subunit protein uL15 from Magnetococcus marinus (strain ATCC BAA-1437 / JCM 17883 / MC-1).